A 98-amino-acid polypeptide reads, in one-letter code: NADH-ubiquinone oxidoreductase chain 4L (98 aa).

A run of 3 helical transmembrane segments spans residues 1–21 (MSPM…GLAF), 26–46 (LLSA…ATAT), and 58–78 (ILPM…LAIL).

This sequence belongs to the complex I subunit 4L family.

It localises to the mitochondrion membrane. The catalysed reaction is a ubiquinone + NADH + 5 H(+)(in) = a ubiquinol + NAD(+) + 4 H(+)(out). In terms of biological role, core subunit of the mitochondrial membrane respiratory chain NADH dehydrogenase (Complex I) which catalyzes electron transfer from NADH through the respiratory chain, using ubiquinone as an electron acceptor. Part of the enzyme membrane arm which is embedded in the lipid bilayer and involved in proton translocation. In Scyliorhinus canicula (Small-spotted catshark), this protein is NADH-ubiquinone oxidoreductase chain 4L (MT-ND4L).